A 212-amino-acid chain; its full sequence is Outer-membrane lipoprotein carrier protein (212 aa).

The first 25 residues, 1-25, serve as a signal peptide directing secretion; sequence MRKRILVSACAALAVFAAHMPTALA.

This sequence belongs to the LolA family. As to quaternary structure, monomer.

It localises to the periplasm. Participates in the translocation of lipoproteins from the inner membrane to the outer membrane. Only forms a complex with a lipoprotein if the residue after the N-terminal Cys is not an aspartate (The Asp acts as a targeting signal to indicate that the lipoprotein should stay in the inner membrane). The sequence is that of Outer-membrane lipoprotein carrier protein from Cupriavidus pinatubonensis (strain JMP 134 / LMG 1197) (Cupriavidus necator (strain JMP 134)).